We begin with the raw amino-acid sequence, 561 residues long: AT-rich interactive domain-containing protein 3B (561 aa).

Met-1 bears the N-acetylmethionine mark. The span at 1–17 (MEPLQQQQQQQQQQQKQ) shows a compositional bias: low complexity. 3 disordered regions span residues 1–36 (MEPL…QQMR), 53–122 (LSAT…SKYF), and 136–179 (PMSN…WNLD). Phosphoserine is present on Ser-89. The span at 90-109 (EPEEEDGGLEDEDGDDEVAE) shows a compositional bias: acidic residues. Residues 152–162 (QAKEDHTKDAS) show a composition bias toward basic and acidic residues. Over residues 164-178 (ASPSVSTAGQPNWNL) the composition is skewed to polar residues. Ser-165 is subject to Phosphoserine. Residues 203 to 365 (SRDFAKLYEL…SPPKIRFPIL (163 aa)) form an interaction with RB1 region. One can recognise an ARID domain in the interval 215–307 (DPERKEFLDD…YLYAYECEKK (93 aa)). Ser-311 is modified (phosphoserine). The residue at position 361 (Arg-361) is an Asymmetric dimethylarginine. Residues 370 to 397 (SSGTNTSSPRISPATTLRKGDGAPVTTV) are disordered. The REKLES domain maps to 419-517 (AALEQLRERL…GVLFAQKPVV (99 aa)). The interaction with ARID3A stretch occupies residues 490 to 513 (SSIGSINMSVDIDGTTYAGVLFAQ). The segment covering 523–552 (SAPQSLGSSASSSSSSHCSPSPTSSRGTPS) has biased composition (low complexity). A disordered region spans residues 523–561 (SAPQSLGSSASSSSSSHCSPSPTSSRGTPSAEPSTSWSL).

In terms of assembly, heterodimer with ARID3A. Interacts with unphosphorylated RB1. As to expression, expressed in placenta, testis and leukocytes. Expressed in neuroblastoma. Present in K-562 erythrocytic leukemia cell line (at protein level).

It localises to the nucleus. Transcription factor which may be involved in neuroblastoma growth and malignant transformation. Favors nuclear targeting of ARID3A. The polypeptide is AT-rich interactive domain-containing protein 3B (ARID3B) (Homo sapiens (Human)).